The following is a 315-amino-acid chain: Adenine deaminase (315 aa).

Residues His-14, His-16, and His-194 each contribute to the Zn(2+) site. The Proton donor role is filled by Glu-197. A Zn(2+)-binding site is contributed by Asp-275. Asp-276 is a binding site for substrate.

It belongs to the metallo-dependent hydrolases superfamily. Adenosine and AMP deaminases family. Adenine deaminase type 2 subfamily. Zn(2+) serves as cofactor.

The catalysed reaction is adenine + H2O + H(+) = hypoxanthine + NH4(+). Functionally, catalyzes the hydrolytic deamination of adenine to hypoxanthine. Plays an important role in the purine salvage pathway and in nitrogen catabolism. This Pseudomonas putida (strain ATCC 47054 / DSM 6125 / CFBP 8728 / NCIMB 11950 / KT2440) protein is Adenine deaminase.